The following is a 548-amino-acid chain: mRNA cleavage and polyadenylation factor CLP1 (548 aa).

Residues Glu19, Lys60, and 123–128 (SSGKTT) contribute to the ATP site. Residues 437–481 (ESEVKEEVKEEKNEKDGEIKQDGEGEKKGEGKGEGEGEGEGKYGE) show a composition bias toward basic and acidic residues. A disordered region spans residues 437-500 (ESEVKEEVKE…DEEEVPFREE (64 aa)). Residues 482 to 494 (EEGEAEGEDDEEE) show a composition bias toward acidic residues.

Belongs to the Clp1 family. Clp1 subfamily. As to quaternary structure, component of a pre-mRNA cleavage factor complex. Interacts directly with PCF11.

It is found in the nucleus. Its function is as follows. Required for endonucleolytic cleavage during polyadenylation-dependent pre-mRNA 3'-end formation. The protein is mRNA cleavage and polyadenylation factor CLP1 of Cryptococcus neoformans var. neoformans serotype D (strain B-3501A) (Filobasidiella neoformans).